The chain runs to 109 residues: MTMKLIWDKFYVSIIFVLTCIVLGIILMCTVVGGGNDYSEVNVSEGDSLWALADQYAGKSDMAKADFVSWVEKENNLADGHVEAGESVVIPVHKTKLIKSDSTIQLANQ.

The LysM domain maps to 39–90 (SEVNVSEGDSLWALADQYAGKSDMAKADFVSWVEKENNLADGHVEAGESVVI).

The protein belongs to the YneA family.

It localises to the cytoplasm. Functionally, inhibits cell division during the SOS response. Affects a later stage of the cell division protein assembly, after the assembly of the Z ring, by probably suppressing recruitment of FtsL and/or DivIC to the division machinery. In Listeria monocytogenes serotype 4b (strain F2365), this protein is Cell division suppressor protein YneA.